The chain runs to 308 residues: C-4 methylsterol oxidase (308 aa).

Residues L56 to I76 traverse the membrane as a helical segment. One can recognise a Fatty acid hydroxylase domain in the interval W145–T282. The Histidine box-1 motif lies at H160–H164. Residues H173–H177 carry the Histidine box-2 motif. Residues H257 to H263 carry the Histidine box-3 motif.

Belongs to the sterol desaturase family. Fe cation serves as cofactor.

It localises to the endoplasmic reticulum membrane. It carries out the reaction 4,4-dimethyl-5alpha-cholest-7-en-3beta-ol + 6 Fe(II)-[cytochrome b5] + 3 O2 + 5 H(+) = 4alpha-carboxy-4beta-methyl-5alpha-cholest-7-ene-3beta-ol + 6 Fe(III)-[cytochrome b5] + 4 H2O. It participates in steroid biosynthesis; zymosterol biosynthesis; zymosterol from lanosterol: step 3/6. In terms of biological role, C-4 methylsterol oxidase; part of the third module of ergosterol biosynthesis pathway that includes the late steps of the pathway. ERG25 is a catalytic component of the C-4 demethylation complex that catalyzes the conversion of 4,4-dimethylfecosterol into fecosterol via 4-methylfecosterol. Catalyzes the three-step monooxygenation required for the demethylation of 4,4-dimethyl and 4alpha-methylsterols. The third module or late pathway involves the ergosterol synthesis itself through consecutive reactions that mainly occur in the endoplasmic reticulum (ER) membrane. Firstly, the squalene synthase ERG9 catalyzes the condensation of 2 farnesyl pyrophosphate moieties to form squalene, which is the precursor of all steroids. Squalene synthase is crucial for balancing the incorporation of farnesyl diphosphate (FPP) into sterol and nonsterol isoprene synthesis. Secondly, the squalene epoxidase ERG1 catalyzes the stereospecific oxidation of squalene to (S)-2,3-epoxysqualene, which is considered to be a rate-limiting enzyme in steroid biosynthesis. Then, the lanosterol synthase ERG7 catalyzes the cyclization of (S)-2,3 oxidosqualene to lanosterol, a reaction that forms the sterol core. In the next steps, lanosterol is transformed to zymosterol through a complex process involving various demethylation, reduction and desaturation reactions. The lanosterol 14-alpha-demethylase ERG11 (also known as CYP51) catalyzes C14-demethylation of lanosterol to produce 4,4'-dimethyl cholesta-8,14,24-triene-3-beta-ol, which is critical for ergosterol biosynthesis. The C-14 reductase ERG24 reduces the C14=C15 double bond of 4,4-dimethyl-cholesta-8,14,24-trienol to produce 4,4-dimethyl-cholesta-8,24-dienol. 4,4-dimethyl-cholesta-8,24-dienol is substrate of the C-4 demethylation complex ERG25-ERG26-ERG27 in which ERG25 catalyzes the three-step monooxygenation required for the demethylation of 4,4-dimethyl and 4alpha-methylsterols, ERG26 catalyzes the oxidative decarboxylation that results in a reduction of the 3-beta-hydroxy group at the C-3 carbon to an oxo group, and ERG27 is responsible for the reduction of the keto group on the C-3. ERG28 has a role as a scaffold to help anchor ERG25, ERG26 and ERG27 to the endoplasmic reticulum and ERG29 regulates the activity of the iron-containing C4-methylsterol oxidase ERG25. Then, the sterol 24-C-methyltransferase ERG6 catalyzes the methyl transfer from S-adenosyl-methionine to the C-24 of zymosterol to form fecosterol. The C-8 sterol isomerase ERG2 catalyzes the reaction which results in unsaturation at C-7 in the B ring of sterols and thus converts fecosterol to episterol. The sterol-C5-desaturase ERG3 then catalyzes the introduction of a C-5 double bond in the B ring to produce 5-dehydroepisterol. The C-22 sterol desaturase ERG5 further converts 5-dehydroepisterol into ergosta-5,7,22,24(28)-tetraen-3beta-ol by forming the C-22(23) double bond in the sterol side chain. Finally, ergosta-5,7,22,24(28)-tetraen-3beta-ol is substrate of the C-24(28) sterol reductase ERG4 to produce ergosterol. This is C-4 methylsterol oxidase from Candida albicans (strain SC5314 / ATCC MYA-2876) (Yeast).